Here is a 127-residue protein sequence, read N- to C-terminus: Anti-adapter protein IraD (127 aa).

It belongs to the GpW/Gp25 family. IraD subfamily. As to quaternary structure, interacts with RssB.

The protein localises to the cytoplasm. Inhibits RpoS proteolysis by regulating RssB activity, thereby increasing the stability of the sigma stress factor RpoS during oxidative stress. Its effect on RpoS stability is due to its interaction with RssB, which probably blocks the interaction of RssB with RpoS, and the consequent delivery of the RssB-RpoS complex to the ClpXP protein degradation pathway. The protein is Anti-adapter protein IraD of Escherichia coli O6:H1 (strain CFT073 / ATCC 700928 / UPEC).